A 462-amino-acid chain; its full sequence is Transcription initiation factor TFIID subunit 7-like (462 aa).

2 disordered regions span residues 1–97 (MECP…VPDE) and 327–366 (DSRS…SEEY). Composition is skewed to low complexity over residues 16 to 30 (STPT…SQQE) and 66 to 77 (DADSSAQAAAQA). The segment covering 333–365 (DDDEDEDDEDEDEDEDEDEDEDKEEEEEDCSEE) has biased composition (acidic residues). Positions 342–462 (DEDEDEDEDE…QEQLQRFLKK (121 aa)) form a coiled coil.

The protein belongs to the TAF7 family. TFIID is composed of TATA binding protein (TBP) and a number of TBP-associated factors (TAFs). TAF7L may replace TAF7 in a spermatogenesis-specific form of TFIID. Interacts with TBP; the interaction occurs in a sub-population of cells (pachytene and haploid round spermatids) and is developmentally regulated through differential intracellular localization of the two proteins. Interacts with TAF1. As to expression, testis-specific.

It is found in the nucleus. Its subcellular location is the cytoplasm. Functionally, probably functions as a spermatogenesis-specific component of the DNA-binding general transcription factor complex TFIID, a multimeric protein complex that plays a central role in mediating promoter responses to various activators and repressors. May play a role in spermatogenesis. The protein is Transcription initiation factor TFIID subunit 7-like (TAF7L) of Homo sapiens (Human).